Reading from the N-terminus, the 110-residue chain is Non-specific lipid-transfer protein 4 (110 aa).

The N-terminal stretch at 1 to 17 (CVVLVMCMVVIAPMAEG) is a signal peptide. Disulfide bonds link C21–C68, C31–C45, C46–C91, and C66–C105.

It belongs to the plant LTP family.

Functionally, plant non-specific lipid-transfer proteins transfer phospholipids as well as galactolipids across membranes. May play a role in wax or cutin deposition in the cell walls of expanding epidermal cells and certain secretory tissues. This chain is Non-specific lipid-transfer protein 4, found in Lens culinaris (Lentil).